The following is a 487-amino-acid chain: MDQEESHVISIFETLGAYFINIFYNFLYKNALYKKHSIVTEYQYQVKGYILGVKQNKKLYEKMLDSFYKYFCNITQINSKTLNFSNFVSTIVDSFIPKEYSQSISLEKKESILELLLCDYISNLGTFITTEKMLPFIIKNRKENYHKVTKEMQDYSLTFLLKKRMELYNKFLRKQAYVEPETELEETYARLSSYNRSLLHQIEELTSEKKSLLADLSTLRKKYEKRQSEYRRLVQLLYQQIQRSSTSKSSYPLTKFIETLPSEHFSNEEYQKETPADQKEVVETELLRKQELLTSQELTSKSPNNYPVPHSRTIVSKPSDNYPVPRSRTTKLDFDNSLQNQELHTKNGFSEKDIVEFSQDKPVFKQDKPEEENILANNQDNPEEEDILAIKQDKPEEEDILAIKQDKPEEEDILEFNQDKPEFKEAVLDIKENILEEENQDEPIVQNPFLENFWKPEQKTFNQSGLFEESSYFSNDWSGGDVTLNFS.

Residues histidine 7–tyrosine 28 form a helical membrane-spanning segment. 3 N-linked (GlcNAc...) asparagine; by host glycosylation sites follow: asparagine 73, asparagine 83, and asparagine 195. Residues arginine 196–glutamine 235 adopt a coiled-coil conformation. A compositionally biased stretch (polar residues) spans threonine 294–asparagine 305. Residues threonine 294–valine 324 are disordered. N-linked (GlcNAc...) asparagine; by host glycosylation occurs at asparagine 462.

Belongs to the asfivirus B475L family.

It localises to the host membrane. This is an uncharacterized protein from African swine fever virus (isolate Tick/South Africa/Pretoriuskop Pr4/1996) (ASFV).